The following is a 242-amino-acid chain: Type III pantothenate kinase (242 aa).

7 to 14 provides a ligand contact to ATP; it reads DNSNTRTK. Substrate contacts are provided by residues Tyr-88 and 95 to 98; that span reads GADR. The active-site Proton acceptor is the Asp-97. Residue Asp-117 coordinates K(+). Residue Thr-120 participates in ATP binding. Thr-172 contributes to the substrate binding site.

The protein belongs to the type III pantothenate kinase family. As to quaternary structure, homodimer. The cofactor is NH4(+). Requires K(+) as cofactor.

The protein resides in the cytoplasm. The enzyme catalyses (R)-pantothenate + ATP = (R)-4'-phosphopantothenate + ADP + H(+). It functions in the pathway cofactor biosynthesis; coenzyme A biosynthesis; CoA from (R)-pantothenate: step 1/5. Functionally, catalyzes the phosphorylation of pantothenate (Pan), the first step in CoA biosynthesis. In Akkermansia muciniphila (strain ATCC BAA-835 / DSM 22959 / JCM 33894 / BCRC 81048 / CCUG 64013 / CIP 107961 / Muc), this protein is Type III pantothenate kinase.